Here is a 668-residue protein sequence, read N- to C-terminus: DNA ligase (668 aa).

Residues 31–35 (DAEYD), 80–81 (SL), and Glu-112 each bind NAD(+). The N6-AMP-lysine intermediate role is filled by Lys-114. Arg-135, Glu-172, Lys-289, and Lys-313 together coordinate NAD(+). Cys-407, Cys-410, Cys-425, and Cys-431 together coordinate Zn(2+). One can recognise a BRCT domain in the interval 591-668 (SVPQPLAGKV…NEEQLIELLN (78 aa)).

Belongs to the NAD-dependent DNA ligase family. LigA subfamily. Mg(2+) is required as a cofactor. The cofactor is Mn(2+).

It carries out the reaction NAD(+) + (deoxyribonucleotide)n-3'-hydroxyl + 5'-phospho-(deoxyribonucleotide)m = (deoxyribonucleotide)n+m + AMP + beta-nicotinamide D-nucleotide.. Its function is as follows. DNA ligase that catalyzes the formation of phosphodiester linkages between 5'-phosphoryl and 3'-hydroxyl groups in double-stranded DNA using NAD as a coenzyme and as the energy source for the reaction. It is essential for DNA replication and repair of damaged DNA. In Aliivibrio fischeri (strain MJ11) (Vibrio fischeri), this protein is DNA ligase.